Here is a 248-residue protein sequence, read N- to C-terminus: 5'-nucleotidase SurE (248 aa).

A divalent metal cation is bound by residues Asp-8, Asp-9, Ser-39, and Asn-91.

Belongs to the SurE nucleotidase family. A divalent metal cation is required as a cofactor.

It localises to the cytoplasm. The catalysed reaction is a ribonucleoside 5'-phosphate + H2O = a ribonucleoside + phosphate. Functionally, nucleotidase that shows phosphatase activity on nucleoside 5'-monophosphates. The chain is 5'-nucleotidase SurE from Pseudoalteromonas atlantica (strain T6c / ATCC BAA-1087).